The chain runs to 23 residues: Unknown protein 1 (23 aa).

The sequence is that of Unknown protein 1 from Coniferiporia sulphurascens (Laminated root rot fungus).